The primary structure comprises 200 residues: Sperm acrosome developmental regulator (200 aa).

The residue at position 63 (Ser-63) is a Phosphoserine. A compositionally biased stretch (basic residues) spans 167–183; that stretch reads QERRRRRRMRSHASHTS. Residues 167 to 200 form a disordered region; it reads QERRRRRRMRSHASHTSRHSESVQGLKHDARSPL. A compositionally biased stretch (basic and acidic residues) spans 184–200; it reads RHSESVQGLKHDARSPL.

It localises to the cytoplasmic vesicle. Its subcellular location is the secretory vesicle. The protein localises to the acrosome. In terms of biological role, may play an important role in acrosome formation and nucleus shaping during spermiogenesis. This chain is Sperm acrosome developmental regulator (Spacdr), found in Rattus norvegicus (Rat).